Consider the following 429-residue polypeptide: Adenylosuccinate synthetase (429 aa).

GTP-binding positions include 12–18 (GDEGKGK) and 40–42 (GHT). D13 functions as the Proton acceptor in the catalytic mechanism. Residues D13 and G40 each contribute to the Mg(2+) site. IMP-binding positions include 13 to 16 (DEGK), 38 to 41 (NAGH), T129, R143, Q224, T239, and R303. Residue H41 is the Proton donor of the active site. Substrate is bound at residue 299–305 (VTTGRAR). Residues R305, 331-333 (KLD), and 413-415 (GVG) contribute to the GTP site.

It belongs to the adenylosuccinate synthetase family. As to quaternary structure, homodimer. Mg(2+) serves as cofactor.

The protein localises to the cytoplasm. It catalyses the reaction IMP + L-aspartate + GTP = N(6)-(1,2-dicarboxyethyl)-AMP + GDP + phosphate + 2 H(+). It functions in the pathway purine metabolism; AMP biosynthesis via de novo pathway; AMP from IMP: step 1/2. Its function is as follows. Plays an important role in the de novo pathway of purine nucleotide biosynthesis. Catalyzes the first committed step in the biosynthesis of AMP from IMP. The chain is Adenylosuccinate synthetase from Rhodococcus jostii (strain RHA1).